Here is a 351-residue protein sequence, read N- to C-terminus: Small ribosomal subunit biogenesis GTPase RsgA (351 aa).

The span at 1 to 12 (MAKHKLSKGQQR) shows a compositional bias: basic residues. The tract at residues 1 to 37 (MAKHKLSKGQQRRVRENHQRRLKKQDNKPEMDDNQLG) is disordered. Basic and acidic residues predominate over residues 13–31 (RVRENHQRRLKKQDNKPEM). The region spanning 112–274 (YYDGIKPIAA…VIDSPGVREF (163 aa)) is the CP-type G domain. Residues 160–163 (NKID) and 214–222 (GQSGVGKSS) each bind GTP. Zn(2+) contacts are provided by C298, C303, H305, and C311.

The protein belongs to the TRAFAC class YlqF/YawG GTPase family. RsgA subfamily. As to quaternary structure, monomer. Associates with 30S ribosomal subunit, binds 16S rRNA. Zn(2+) is required as a cofactor.

It localises to the cytoplasm. Its function is as follows. One of several proteins that assist in the late maturation steps of the functional core of the 30S ribosomal subunit. Helps release RbfA from mature subunits. May play a role in the assembly of ribosomal proteins into the subunit. Circularly permuted GTPase that catalyzes slow GTP hydrolysis, GTPase activity is stimulated by the 30S ribosomal subunit. This chain is Small ribosomal subunit biogenesis GTPase RsgA, found in Photorhabdus laumondii subsp. laumondii (strain DSM 15139 / CIP 105565 / TT01) (Photorhabdus luminescens subsp. laumondii).